Here is a 656-residue protein sequence, read N- to C-terminus: Protein arginine N-methyltransferase 7 (656 aa).

2 consecutive SAM-dependent MTase PRMT-type domains span residues 12–338 (EREW…FSIW) and 343–656 (GKDS…QSGN).

It belongs to the class I-like SAM-binding methyltransferase superfamily. Protein arginine N-methyltransferase family. PRMT7 subfamily.

In terms of biological role, arginine methyltransferase that can both catalyze the formation of omega-N monomethylarginine (MMA) and symmetrical dimethylarginine (sDMA). The chain is Protein arginine N-methyltransferase 7 (prmt-7) from Caenorhabditis briggsae.